Reading from the N-terminus, the 273-residue chain is Rhamnulose-1-phosphate aldolase (273 aa).

Glu117 is an active-site residue. His140, His142, and His211 together coordinate Zn(2+).

The protein belongs to the aldolase class II family. RhaD subfamily. Requires Zn(2+) as cofactor.

It is found in the cytoplasm. It carries out the reaction L-rhamnulose 1-phosphate = (S)-lactaldehyde + dihydroxyacetone phosphate. Its pathway is carbohydrate degradation; L-rhamnose degradation; glycerone phosphate from L-rhamnose: step 3/3. Functionally, catalyzes the reversible cleavage of L-rhamnulose-1-phosphate to dihydroxyacetone phosphate (DHAP) and L-lactaldehyde. In Listeria monocytogenes serotype 4a (strain HCC23), this protein is Rhamnulose-1-phosphate aldolase.